The following is a 108-amino-acid chain: Class I hydrophobin hgfII (108 aa).

The N-terminal stretch at 1–19 (MFSRIAAVSFLALPLLAAA) is a signal peptide. 4 disulfides stabilise this stretch: C28–C89, C35–C83, C36–C69, and C90–C103. Residue N92 is glycosylated (N-linked (GlcNAc...) asparagine).

This sequence belongs to the fungal hydrophobin family. In terms of assembly, self-assembles to form functional amyloid fibrils called rodlets with a diameter of 15-30 nm. Self-assembly into fibrillar rodlets occurs spontaneously at hydrophobic:hydrophilic interfaces and the rodlets further associate laterally to form amphipathic monolayers. In terms of tissue distribution, highky expressed in hyphae cultured in liquid medium.

It is found in the secreted. It localises to the cell wall. Functionally, aerial growth, conidiation, and dispersal of filamentous fungi in the environment rely upon a capability of their secreting small amphipathic proteins called hydrophobins (HPBs) with low sequence identity. Class I can self-assemble into an outermost layer of rodlet bundles on aerial cell surfaces, conferring cellular hydrophobicity that supports fungal growth, development and dispersal; whereas Class II form highly ordered films at water-air interfaces through intermolecular interactions but contribute nothing to the rodlet structure. HgfII is a class I hydrophobin that is involved in cell surface hydrophobicity and might play a key role during the growth and development of hyphae cultured in liquid medium. This is Class I hydrophobin hgfII from Grifola frondosa (Maitake).